The primary structure comprises 152 residues: Aspartate 1-decarboxylase (152 aa).

Ser24 (schiff-base intermediate with substrate; via pyruvic acid) is an active-site residue. Ser24 bears the Pyruvic acid (Ser) mark. A substrate-binding site is contributed by Thr56. Tyr57 serves as the catalytic Proton donor. Position 72-74 (72-74) interacts with substrate; the sequence is GAA.

Belongs to the PanD family. In terms of assembly, heterooctamer of four alpha and four beta subunits. It depends on pyruvate as a cofactor. Is synthesized initially as an inactive proenzyme, which is activated by self-cleavage at a specific serine bond to produce a beta-subunit with a hydroxyl group at its C-terminus and an alpha-subunit with a pyruvoyl group at its N-terminus.

The protein localises to the cytoplasm. The enzyme catalyses L-aspartate + H(+) = beta-alanine + CO2. It participates in cofactor biosynthesis; (R)-pantothenate biosynthesis; beta-alanine from L-aspartate: step 1/1. In terms of biological role, catalyzes the pyruvoyl-dependent decarboxylation of aspartate to produce beta-alanine. This chain is Aspartate 1-decarboxylase, found in Methylobacterium nodulans (strain LMG 21967 / CNCM I-2342 / ORS 2060).